The chain runs to 724 residues: Phosphoribosylformylglycinamidine synthase subunit PurL (724 aa).

His-34 is a catalytic residue. ATP contacts are provided by Tyr-37 and Lys-75. Glu-77 is a binding site for Mg(2+). Substrate is bound by residues 78 to 81 (SHNH) and Arg-100. His-79 functions as the Proton acceptor in the catalytic mechanism. Residue Asp-101 coordinates Mg(2+). Residue Gln-221 participates in substrate binding. Mg(2+) is bound at residue Asp-249. Residue 292 to 294 (ESQ) coordinates substrate. ATP contacts are provided by Asp-478 and Gly-515. Ser-518 contacts substrate.

Belongs to the FGAMS family. Monomer. Part of the FGAM synthase complex composed of 1 PurL, 1 PurQ and 2 PurS subunits.

Its subcellular location is the cytoplasm. It catalyses the reaction N(2)-formyl-N(1)-(5-phospho-beta-D-ribosyl)glycinamide + L-glutamine + ATP + H2O = 2-formamido-N(1)-(5-O-phospho-beta-D-ribosyl)acetamidine + L-glutamate + ADP + phosphate + H(+). It participates in purine metabolism; IMP biosynthesis via de novo pathway; 5-amino-1-(5-phospho-D-ribosyl)imidazole from N(2)-formyl-N(1)-(5-phospho-D-ribosyl)glycinamide: step 1/2. Part of the phosphoribosylformylglycinamidine synthase complex involved in the purines biosynthetic pathway. Catalyzes the ATP-dependent conversion of formylglycinamide ribonucleotide (FGAR) and glutamine to yield formylglycinamidine ribonucleotide (FGAM) and glutamate. The FGAM synthase complex is composed of three subunits. PurQ produces an ammonia molecule by converting glutamine to glutamate. PurL transfers the ammonia molecule to FGAR to form FGAM in an ATP-dependent manner. PurS interacts with PurQ and PurL and is thought to assist in the transfer of the ammonia molecule from PurQ to PurL. The polypeptide is Phosphoribosylformylglycinamidine synthase subunit PurL (Caldivirga maquilingensis (strain ATCC 700844 / DSM 13496 / JCM 10307 / IC-167)).